A 273-amino-acid polypeptide reads, in one-letter code: ABC transporter glutamine-binding protein GlnH (273 aa).

An N-terminal signal peptide occupies residues Met-1–Ala-20. Cys-21 carries N-palmitoyl cysteine lipidation. Cys-21 is lipidated: S-diacylglycerol cysteine.

This sequence belongs to the bacterial solute-binding protein 3 family. In terms of assembly, the complex is composed of two ATP-binding proteins (GlnQ), two transmembrane proteins (GlnM and GlnP) and a solute-binding protein (GlnH).

Its subcellular location is the cell membrane. Part of the ABC transporter complex GlnHMPQ involved in glutamine transport. The protein is ABC transporter glutamine-binding protein GlnH (glnH) of Bacillus subtilis (strain 168).